We begin with the raw amino-acid sequence, 433 residues long: 4-hydroxy-3-methylbut-2-en-1-yl diphosphate synthase (flavodoxin) (433 aa).

[4Fe-4S] cluster-binding residues include Cys-320, Cys-323, Cys-366, and Glu-373.

Belongs to the IspG family. [4Fe-4S] cluster serves as cofactor.

It catalyses the reaction (2E)-4-hydroxy-3-methylbut-2-enyl diphosphate + oxidized [flavodoxin] + H2O + 2 H(+) = 2-C-methyl-D-erythritol 2,4-cyclic diphosphate + reduced [flavodoxin]. Its pathway is isoprenoid biosynthesis; isopentenyl diphosphate biosynthesis via DXP pathway; isopentenyl diphosphate from 1-deoxy-D-xylulose 5-phosphate: step 5/6. Functionally, converts 2C-methyl-D-erythritol 2,4-cyclodiphosphate (ME-2,4cPP) into 1-hydroxy-2-methyl-2-(E)-butenyl 4-diphosphate. This Beijerinckia indica subsp. indica (strain ATCC 9039 / DSM 1715 / NCIMB 8712) protein is 4-hydroxy-3-methylbut-2-en-1-yl diphosphate synthase (flavodoxin).